The sequence spans 300 residues: Probable mitochondrial 2-oxodicarboxylate carrier (300 aa).

A disordered region spans residues 1 to 20 (MTSKGNAGNPPTPTPAPVKS). Solcar repeat units lie at residues 21 to 104 (QPLW…YEKQ), 114 to 200 (PTQM…IKSA), and 209 to 295 (GVLV…VMKL). The next 6 helical transmembrane spans lie at 27–47 (LVSG…LDVV), 74–93 (LKMY…KRAI), 120–140 (IGSG…FELV), 171–191 (GFFK…GGYF), 209–229 (GVLV…TMLN), and 278–298 (LGPG…LLAG).

It belongs to the mitochondrial carrier (TC 2.A.29) family.

Its subcellular location is the mitochondrion inner membrane. The catalysed reaction is 2-oxoadipate(in) + 2-oxoglutarate(out) = 2-oxoadipate(out) + 2-oxoglutarate(in). It catalyses the reaction hexanedioate(in) + 2-oxoglutarate(out) = hexanedioate(out) + 2-oxoglutarate(in). It carries out the reaction L-2-aminoadipate(in) + 2-oxoglutarate(out) = L-2-aminoadipate(out) + 2-oxoglutarate(in). The enzyme catalyses glutarate(in) + 2-oxoglutarate(out) = glutarate(out) + 2-oxoglutarate(in). The catalysed reaction is 2-oxoheptanedioate(in) + 2-oxoglutarate(out) = 2-oxoheptanedioate(out) + 2-oxoglutarate(in). It catalyses the reaction heptanedioate(in) + 2-oxoglutarate(out) = heptanedioate(out) + 2-oxoglutarate(in). It carries out the reaction citrate(in) + 2-oxoglutarate(out) = citrate(out) + 2-oxoglutarate(in). Functionally, transports dicarboxylates across the inner membranes of mitochondria by a counter-exchange mechanism. Can transport 2-oxoadipate (2-oxohexanedioate), 2-oxoglutarate, adipate (hexanedioate), glutarate, and to a lesser extent, pimelate (heptanedioate), 2-oxopimelate (2-oxoheptanedioate), 2-aminoadipate (2-aminohexanedioate), oxaloacetate, and citrate. Plays a central role in catabolism of lysine, hydroxylysine, and tryptophan, by transporting common metabolite intermediates (such as 2-oxoadipate) into the mitochondria, where it is converted into acetyl-CoA and can enter the citric acid (TCA) cycle. This chain is Probable mitochondrial 2-oxodicarboxylate carrier (mcfT), found in Dictyostelium discoideum (Social amoeba).